The primary structure comprises 449 residues: Allantoinase (449 aa).

Zn(2+) contacts are provided by His61, His63, Lys148, His184, His240, and Asp313. Residue Lys148 is modified to N6-carboxylysine.

It belongs to the metallo-dependent hydrolases superfamily. Allantoinase family. Homotetramer. Zn(2+) serves as cofactor. Post-translationally, carboxylation allows a single lysine to coordinate two zinc ions.

It catalyses the reaction (S)-allantoin + H2O = allantoate + H(+). It participates in nitrogen metabolism; (S)-allantoin degradation; allantoate from (S)-allantoin: step 1/1. In terms of biological role, catalyzes the conversion of allantoin (5-ureidohydantoin) to allantoic acid by hydrolytic cleavage of the five-member hydantoin ring. The polypeptide is Allantoinase (Desulfitobacterium hafniense (strain DSM 10664 / DCB-2)).